A 407-amino-acid chain; its full sequence is Putative D-cysteine desulfhydrase 2, mitochondrial (407 aa).

The N-terminal 34 residues, 1-34 (MRPSPALAGGGRTVANLLSATEWMLPSPATQVHT), are a transit peptide targeting the mitochondrion. Residues 39-72 (PSHSPPSPPHHFAFSNLTTAPKRNGGKGEEEGRP) form a disordered region. Position 90 is an N6-(pyridoxal phosphate)lysine (lysine 90).

This sequence belongs to the ACC deaminase/D-cysteine desulfhydrase family. Pyridoxal 5'-phosphate serves as cofactor.

It localises to the mitochondrion. The catalysed reaction is D-cysteine + H2O = hydrogen sulfide + pyruvate + NH4(+) + H(+). Catalyzes the production of hydrogen sulfide (H2S) from cysteine. In Oryza sativa subsp. japonica (Rice), this protein is Putative D-cysteine desulfhydrase 2, mitochondrial.